A 150-amino-acid polypeptide reads, in one-letter code: Cytochrome c oxidase subunit 5A, mitochondrial (150 aa).

The N-terminal 41 residues, 1–41, are a transit peptide targeting the mitochondrion; the sequence is MLGTALRRCAVAAASRAGPRGLQHPAPVPGPTAAIQSIRCY. An SIFI-degron motif is present at residues 2-17; that stretch reads LGTALRRCAVAAASRA. Residues Lys87 and Lys113 each carry the N6-acetyllysine modification. Phosphothreonine is present on Thr141.

It belongs to the cytochrome c oxidase subunit 5A family. In terms of assembly, component of the cytochrome c oxidase (complex IV, CIV), a multisubunit enzyme composed of 14 subunits. The complex is composed of a catalytic core of 3 subunits MT-CO1, MT-CO2 and MT-CO3, encoded in the mitochondrial DNA, and 11 supernumerary subunits COX4I, COX5A, COX5B, COX6A, COX6B, COX6C, COX7A, COX7B, COX7C, COX8 and NDUFA4, which are encoded in the nuclear genome. The complex exists as a monomer or a dimer and forms supercomplexes (SCs) in the inner mitochondrial membrane with NADH-ubiquinone oxidoreductase (complex I, CI) and ubiquinol-cytochrome c oxidoreductase (cytochrome b-c1 complex, complex III, CIII), resulting in different assemblies (supercomplex SCI(1)III(2)IV(1) and megacomplex MCI(2)III(2)IV(2)). Interacts with AFG1L. Interacts with RAB5IF. In response to mitochondrial stress, the precursor protein is ubiquitinated by the SIFI complex in the cytoplasm before mitochondrial import, leading to its degradation. Within the SIFI complex, UBR4 initiates ubiquitin chain that are further elongated or branched by KCMF1.

The protein resides in the mitochondrion inner membrane. It participates in energy metabolism; oxidative phosphorylation. Component of the cytochrome c oxidase, the last enzyme in the mitochondrial electron transport chain which drives oxidative phosphorylation. The respiratory chain contains 3 multisubunit complexes succinate dehydrogenase (complex II, CII), ubiquinol-cytochrome c oxidoreductase (cytochrome b-c1 complex, complex III, CIII) and cytochrome c oxidase (complex IV, CIV), that cooperate to transfer electrons derived from NADH and succinate to molecular oxygen, creating an electrochemical gradient over the inner membrane that drives transmembrane transport and the ATP synthase. Cytochrome c oxidase is the component of the respiratory chain that catalyzes the reduction of oxygen to water. Electrons originating from reduced cytochrome c in the intermembrane space (IMS) are transferred via the dinuclear copper A center (CU(A)) of subunit 2 and heme A of subunit 1 to the active site in subunit 1, a binuclear center (BNC) formed by heme A3 and copper B (CU(B)). The BNC reduces molecular oxygen to 2 water molecules using 4 electrons from cytochrome c in the IMS and 4 protons from the mitochondrial matrix. The protein is Cytochrome c oxidase subunit 5A, mitochondrial (COX5A) of Nycticebus coucang (Slow loris).